A 154-amino-acid polypeptide reads, in one-letter code: UPF0178 protein in pahZ1 5'region (154 aa).

Belongs to the UPF0178 family.

This Paucimonas lemoignei (Pseudomonas lemoignei) protein is UPF0178 protein in pahZ1 5'region.